Consider the following 381-residue polypeptide: Probable G-protein coupled receptor 34 (381 aa).

Over 1-61 the chain is Extracellular; the sequence is MRSHTITMTT…LLSTVLTTSY (61 aa). 3 N-linked (GlcNAc...) asparagine glycosylation sites follow: Asn-28, Asn-36, and Asn-42. A helical membrane pass occupies residues 62 to 82; it reads SVIFIVGLVGNIIALYVFLGI. At 83–88 the chain is on the cytoplasmic side; sequence HRKRNS. Residues 89-109 traverse the membrane as a helical segment; that stretch reads IQIYLLNVAIADLLLIFCLPF. Over 110 to 128 the chain is Extracellular; that stretch reads RIMYHINQNKWTLGVILCK. Cys-127 and Cys-204 are joined by a disulfide. The chain crosses the membrane as a helical span at residues 129–149; that stretch reads VVGTLFYMNMYISIILLGFIS. Residues 150-171 lie on the Cytoplasmic side of the membrane; it reads LDRYIKINRSIQQRKAITTKQS. The helical transmembrane segment at 172–192 threads the bilayer; the sequence is IYVCCIVWMLALGGFLTMIIL. Over 193 to 216 the chain is Extracellular; sequence TLKKGGHNSTMCFHYRDKHNAKGE. N-linked (GlcNAc...) asparagine glycosylation occurs at Asn-200. A helical membrane pass occupies residues 217–237; sequence AIFNFILVVMFWLIFLLIILS. Residues 238–269 lie on the Cytoplasmic side of the membrane; that stretch reads YIKIGKNLLRISKRRSKFPNSGKYATTARNSF. The chain crosses the membrane as a helical span at residues 270 to 290; that stretch reads IVLIIFTICFVPYHAFRFIYI. Over 291–310 the chain is Extracellular; it reads SSQLNVSSCYWKEIVHKTNE. A glycan (N-linked (GlcNAc...) asparagine) is linked at Asn-295. The helical transmembrane segment at 311-331 threads the bilayer; that stretch reads IMLVLSSFNSCLDPVMYFLMS. Residues 332-381 lie on the Cytoplasmic side of the membrane; sequence SNIRKIMCQLLFRRFQGEPSRSESTSEFKPGYSLHDTSVAVKIQSSSKST.

Belongs to the G-protein coupled receptor 1 family.

It localises to the cell membrane. Functionally, G-protein-coupled receptor of lysophosphatidylserine (LysoPS) that plays different roles in immune response. Acts a damage-sensing receptor that triggers tissue repair upon recognition of dying neutrophils. Mechanistically, apoptotic neutrophils release lysophosphatydilserine that are recognized by type 3 innate lymphoid cells (ILC3s) via GPR34, which activates downstream PI3K-AKT and RAS-ERK signaling pathways leading to STAT3 activation and IL-22 production. Plays an important role in microglial function, controlling morphology and phagocytosis. This Gorilla gorilla gorilla (Western lowland gorilla) protein is Probable G-protein coupled receptor 34 (GPR34).